We begin with the raw amino-acid sequence, 158 residues long: NAD(P)H-quinone oxidoreductase subunit N (158 aa).

This sequence belongs to the complex I NdhN subunit family. NDH-1 can be composed of about 15 different subunits; different subcomplexes with different compositions have been identified which probably have different functions.

The protein localises to the cellular thylakoid membrane. The catalysed reaction is a plastoquinone + NADH + (n+1) H(+)(in) = a plastoquinol + NAD(+) + n H(+)(out). It carries out the reaction a plastoquinone + NADPH + (n+1) H(+)(in) = a plastoquinol + NADP(+) + n H(+)(out). NDH-1 shuttles electrons from an unknown electron donor, via FMN and iron-sulfur (Fe-S) centers, to quinones in the respiratory and/or the photosynthetic chain. The immediate electron acceptor for the enzyme in this species is believed to be plastoquinone. Couples the redox reaction to proton translocation, and thus conserves the redox energy in a proton gradient. Cyanobacterial NDH-1 also plays a role in inorganic carbon-concentration. This chain is NAD(P)H-quinone oxidoreductase subunit N, found in Prochlorococcus marinus (strain AS9601).